We begin with the raw amino-acid sequence, 217 residues long: Probable transaldolase (217 aa).

Catalysis depends on Lys-84, which acts as the Schiff-base intermediate with substrate.

The protein belongs to the transaldolase family. Type 3B subfamily.

Its subcellular location is the cytoplasm. The catalysed reaction is D-sedoheptulose 7-phosphate + D-glyceraldehyde 3-phosphate = D-erythrose 4-phosphate + beta-D-fructose 6-phosphate. Its pathway is carbohydrate degradation; pentose phosphate pathway; D-glyceraldehyde 3-phosphate and beta-D-fructose 6-phosphate from D-ribose 5-phosphate and D-xylulose 5-phosphate (non-oxidative stage): step 2/3. Functionally, transaldolase is important for the balance of metabolites in the pentose-phosphate pathway. This chain is Probable transaldolase, found in Roseiflexus sp. (strain RS-1).